The following is a 735-amino-acid chain: Phosphoribosylformylglycinamidine synthase subunit PurL (735 aa).

Histidine 49 is a catalytic residue. ATP is bound by residues tyrosine 52 and lysine 91. Glutamate 93 contributes to the Mg(2+) binding site. Residues 94 to 97 and arginine 116 contribute to the substrate site; that span reads SHNH. The active-site Proton acceptor is the histidine 95. Residue aspartate 117 coordinates Mg(2+). Glutamine 240 is a substrate binding site. Position 268 (aspartate 268) interacts with Mg(2+). 312-314 is a substrate binding site; the sequence is ESQ. 2 residues coordinate ATP: aspartate 493 and glycine 530. Residue asparagine 531 coordinates Mg(2+). Serine 533 is a substrate binding site.

It belongs to the FGAMS family. Monomer. Part of the FGAM synthase complex composed of 1 PurL, 1 PurQ and 2 PurS subunits.

It is found in the cytoplasm. It carries out the reaction N(2)-formyl-N(1)-(5-phospho-beta-D-ribosyl)glycinamide + L-glutamine + ATP + H2O = 2-formamido-N(1)-(5-O-phospho-beta-D-ribosyl)acetamidine + L-glutamate + ADP + phosphate + H(+). It participates in purine metabolism; IMP biosynthesis via de novo pathway; 5-amino-1-(5-phospho-D-ribosyl)imidazole from N(2)-formyl-N(1)-(5-phospho-D-ribosyl)glycinamide: step 1/2. In terms of biological role, part of the phosphoribosylformylglycinamidine synthase complex involved in the purines biosynthetic pathway. Catalyzes the ATP-dependent conversion of formylglycinamide ribonucleotide (FGAR) and glutamine to yield formylglycinamidine ribonucleotide (FGAM) and glutamate. The FGAM synthase complex is composed of three subunits. PurQ produces an ammonia molecule by converting glutamine to glutamate. PurL transfers the ammonia molecule to FGAR to form FGAM in an ATP-dependent manner. PurS interacts with PurQ and PurL and is thought to assist in the transfer of the ammonia molecule from PurQ to PurL. This Azorhizobium caulinodans (strain ATCC 43989 / DSM 5975 / JCM 20966 / LMG 6465 / NBRC 14845 / NCIMB 13405 / ORS 571) protein is Phosphoribosylformylglycinamidine synthase subunit PurL.